Here is a 982-residue protein sequence, read N- to C-terminus: MANSMNGRNPGGRGGNPRKGRILGIIDAIQDAVGPPKQAAADRRTVEKTWKLMDKVVRLCQNPKLQLKNSPPYILDILPDTYQHLRLILSKYDDNQKLAQLSENEYFKIYIDSLMKKSKRAIRLFKEGKERMYEEQSQDRRNLTKLSLIFSHMLAEIKAIFPNGQFQGDNFRITKADAAEFWRKFFGDKTIVPWKVFRQCLHEVHQISSGLEAMALKSTIDLTCNDYISVFEFDIFTRLFQPWGSILRNWNFLAVTHPGYMAFLTYDEVKARLQKYSTKPGSYIFRLSCTRLGQWAIGYVTGDGNILQTIPHNKPLFQALIDGSREGFYLYPDGRSYNPDLTGLCEPTPHDHIKVTQEQYELYCEMGSTFQLCKICAENDKDVKIEPCGHLMCTSCLTAWQESDGQGCPFCRCEIKGTEPIIVDPFDPRDEGSRCCSIIDPFSIPMLDLDDDDDREESLMMNRLASVRKCTDRQNSPVTSPGSSPLAQRRKPQPDPLQIPHLSLPPVPPRLDLIQKGIVRSPCGSPTGSPKSSPCMVRKQDKPLPAPPPPLRDPPPPPERPPPIPPDNRLSRHFHHGESVPSRDQPMPLEAWCPRDAFGTNQVMGCRILGDGSPKPGVTANSSLNGRHSRMGSEQVLMRKHRRHDLPSEGAKVFSNGHLATEEYDVPPRLSPPPPVTTLLPSIKCTGPLANCLSEKTRDTVEDDDDEYKIPSSHPVSLNSQPSHCHNVKAPVRSCDNGHCILNGTHGAPSEMKKSNIPDLGIYLKGGGSDSASDPVPLPPARPPPRDSPKHGSSVNRTPSDYDLLIPPLGEDAFDALPPSLPPPPPPARHSLIEHSKPPGSSSRPSSGQDLFLLPSDPFFDPTSGQVPLPPARRAAGDSGKANRASQDYDQLPSSSDGSQAPARPPKPRPRRTAPEIHHRKPHGPEAALENVDAKIAKLMGEGYAFEEVKRALEIAQNNVEVARSILREFAFPPPVSPRLNL.

The 4H stretch occupies residues 35-167 (PPKQAAADRR…KAIFPNGQFQ (133 aa)). Residues 35 to 343 (PPKQAAADRR…GRSYNPDLTG (309 aa)) form the Cbl-PTB domain. An EF-hand-like region spans residues 168 to 240 (GDNFRITKAD…FEFDIFTRLF (73 aa)). Positions 221, 223, 225, 227, and 232 each coordinate Ca(2+). The interval 241 to 343 (QPWGSILRNW…GRSYNPDLTG (103 aa)) is SH2-like. S282 is subject to Phosphoserine; by PKC/PRKCQ. R286 contacts 4-O-phospho-L-tyrosine. The linker stretch occupies residues 344–372 (LCEPTPHDHIKVTQEQYELYCEMGSTFQL). Phosphotyrosine is present on Y363. The segment at 373-412 (CKICAENDKDVKIEPCGHLMCTSCLTAWQESDGQGCPFCR) adopts an RING-type zinc-finger fold. The tract at residues 465–588 (ASVRKCTDRQ…SVPSRDQPMP (124 aa)) is disordered. Polar residues predominate over residues 473–486 (RQNSPVTSPGSSPL). 6 positions are modified to phosphoserine: S476, S480, S484, S521, S525, and S529. Residues 543–567 (PLPAPPPPLRDPPPPPERPPPIPPD) form an interaction with VAV1 region. The segment covering 544–566 (LPAPPPPLRDPPPPPERPPPIPP) has biased composition (pro residues). S633 is subject to Phosphoserine. 2 positions are modified to phosphotyrosine: Y664 and Y708. 2 disordered regions span residues 702-723 (EDDD…SQPS) and 745-929 (THGA…EAAL). The span at 714–723 (HPVSLNSQPS) shows a compositional bias: polar residues. The span at 819-828 (PSLPPPPPPA) shows a compositional bias: pro residues. The segment covering 838 to 848 (PPGSSSRPSSG) has biased composition (low complexity). Residues 884-899 (RASQDYDQLPSSSDGS) show a composition bias toward polar residues. Position 889 is a phosphotyrosine (Y889). Positions 891 to 927 (QLPSSSDGSQAPARPPKPRPRRTAPEIHHRKPHGPEA) are interaction with SH3KBP1. Positions 906-922 (PKPRPRRTAPEIHHRKP) are enriched in basic residues. In terms of domain architecture, UBA spans 931–970 (NVDAKIAKLMGEGYAFEEVKRALEIAQNNVEVARSILREF).

In terms of assembly, interacts with SH3 domain-containing proteins LCK, CRK and SORBS1. Interacts with LCP2 and ZAP70. Interacts with CBL. Interacts with SH3 domain-containing proteins VAV1, FYN, FGR, PLCG1, GRB2, CRKL, PIK3R1 and SH3KBP1/CIN85. Identified in heterotrimeric complexes with SH3KBP1/CIN85, CD2AP and ARHGEF7, where one CBLB peptide binds two copies of the other protein. Interacts with poly-ubiquitinated proteins. Dimerization is required for the binding of poly-ubiquitin, but not for the binding of mono-ubiquitin. Interacts with EGFR (phosphorylated). Interacts with IFT20. Post-translationally, phosphorylated on tyrosine and serine residues upon TCR or BCR activation. Phosphorylated on Tyr-664 and Tyr-708 in adipocytes following insulin stimulation. In terms of processing, auto-ubiquitinated upon EGF-mediated cell activation or upon T-cell costimulation by CD28; which promotes proteasomal degradation.

It localises to the cytoplasm. The enzyme catalyses S-ubiquitinyl-[E2 ubiquitin-conjugating enzyme]-L-cysteine + [acceptor protein]-L-lysine = [E2 ubiquitin-conjugating enzyme]-L-cysteine + N(6)-ubiquitinyl-[acceptor protein]-L-lysine.. Its pathway is protein modification; protein ubiquitination. E3 ubiquitin-protein ligase which accepts ubiquitin from specific E2 ubiquitin-conjugating enzymes, and transfers it to substrates, generally promoting their degradation by the proteasome. Negatively regulates TCR (T-cell receptor), BCR (B-cell receptor) and FCER1 (high affinity immunoglobulin epsilon receptor) signal transduction pathways. In naive T-cells, inhibits VAV1 activation upon TCR engagement and imposes a requirement for CD28 costimulation for proliferation and IL-2 production. Also acts by promoting PIK3R1/p85 ubiquitination, which impairs its recruitment to the TCR and subsequent activation. In activated T-cells, inhibits PLCG1 activation and calcium mobilization upon restimulation and promotes anergy. In B-cells, acts by ubiquitinating SYK and promoting its proteasomal degradation. Slightly promotes SRC ubiquitination. May be involved in EGFR ubiquitination and internalization. May be functionally coupled with the E2 ubiquitin-protein ligase UB2D3. In association with CBL, required for proper feedback inhibition of ciliary platelet-derived growth factor receptor-alpha (PDGFRA) signaling pathway via ubiquitination and internalization of PDGFRA. The chain is E3 ubiquitin-protein ligase CBL-B (Cblb) from Mus musculus (Mouse).